The sequence spans 93 residues: Small ribosomal subunit protein uS19c (93 aa).

The disordered stretch occupies residues 73–93 (EFSPTRTFRGHTKSDKKSRRP). Basic residues predominate over residues 80–93 (FRGHTKSDKKSRRP).

This sequence belongs to the universal ribosomal protein uS19 family.

It localises to the plastid. The protein resides in the chloroplast. In terms of biological role, protein S19 forms a complex with S13 that binds strongly to the 16S ribosomal RNA. This Mesostigma viride (Green alga) protein is Small ribosomal subunit protein uS19c (rps19).